The sequence spans 533 residues: Di/tripeptide-binding protein 4 (533 aa).

The N-terminal stretch at 1 to 25 is a signal peptide; the sequence is MLHPLLRHLPLALALALCAAGAAQA.

It belongs to the bacterial solute-binding protein 5 family. The complex is composed of two ATP-binding proteins (DppD and DppF), two transmembrane proteins (DppB and DppC) and a solute-binding protein (DppA4). Five orthologous SBPs (DppA1-A5) are present in P.aeruginosa, which increases the substrate specificity of the DppBCDF transporter.

In terms of biological role, part of the ABC transporter DppABCDF involved in the uptake of various di/tripeptides. Prefers dipeptides with acidic residues at the C-terminal end. Efficiently uses tripeptides. The chain is Di/tripeptide-binding protein 4 from Pseudomonas aeruginosa (strain UCBPP-PA14).